The chain runs to 387 residues: Fetuin-B (387 aa).

An N-terminal signal peptide occupies residues 1–18 (MNVLLLLVLCTLAMGCGA). Cystatin fetuin-B-type domains lie at 25-139 (AARP…YNCT) and 150-258 (MTCP…VTCS). N-linked (GlcNAc...) asparagine glycosylation occurs at N37. Intrachain disulfides connect C94–C105, C118–C138, C152–C155, C217–C225, and C238–C257. N137 carries N-linked (GlcNAc...) asparagine glycosylation. Positions 264–306 (APTPRGENATVNQRPANPSKTEELQQQNTAPTNSPTKAVPKGS) are disordered. An N-linked (GlcNAc...) asparagine glycan is attached at N271. Positions 272–299 (ATVNQRPANPSKTEELQQQNTAPTNSPT) are enriched in polar residues. Residues T292 and T295 are each glycosylated (O-linked (GalNAc...) threonine). S320 carries the phosphoserine modification. The tract at residues 366–387 (KEQRSAECPGPAQKGYPFILPS) is disordered.

The protein belongs to the fetuin family. In terms of tissue distribution, liver and testis.

It localises to the secreted. Functionally, protease inhibitor required for egg fertilization. Required to prevent premature zona pellucida hardening before fertilization, probably by inhibiting the protease activity of ASTL, a protease that mediates the cleavage of ZP2 and triggers zona pellucida hardening. This is Fetuin-B (FETUB) from Bos taurus (Bovine).